A 169-amino-acid chain; its full sequence is CKLF-like MARVEL transmembrane domain-containing protein 1 (169 aa).

One can recognise an MARVEL domain in the interval 17–135 (NLKQPETAAA…DAFVVTTKMR (119 aa)). Transmembrane regions (helical) follow at residues 22 to 42 (ETAA…ITQA), 46 to 66 (FITI…IYVL), 79 to 99 (LLDL…AILA), and 110 to 130 (YVGG…AFVV).

This sequence belongs to the chemokine-like factor family. As to expression, highly expressed in testis.

It localises to the membrane. The protein is CKLF-like MARVEL transmembrane domain-containing protein 1 (CMTM1) of Homo sapiens (Human).